Consider the following 462-residue polypeptide: Fasciclin-like arabinogalactan protein 18 (462 aa).

Positions 1-25 are cleaved as a signal peptide; the sequence is MDRCIYGCSVITIFFSFFFLLNASA. N-linked (GlcNAc...) asparagine glycosylation is found at Asn-32, Asn-77, and Asn-293. 2 consecutive FAS1 domains span residues 40–185 and 271–414; these read NSNS…ERLL and VKDF…DGVL.

It belongs to the fasciclin-like AGP family.

Its subcellular location is the secreted. May be a cell surface adhesion protein. The sequence is that of Fasciclin-like arabinogalactan protein 18 (FLA18) from Arabidopsis thaliana (Mouse-ear cress).